Reading from the N-terminus, the 555-residue chain is Chaperonin GroEL (555 aa).

Residues 29-32 (TLGP), lysine 50, 86-90 (DGTTT), glycine 418, and aspartate 499 contribute to the ATP site. The segment at 528–555 (HEEDNNTGNRSGGGVGGGHHGGMGGMDF) is disordered. Positions 537 to 555 (RSGGGVGGGHHGGMGGMDF) are enriched in gly residues.

This sequence belongs to the chaperonin (HSP60) family. In terms of assembly, forms a cylinder of 14 subunits composed of two heptameric rings stacked back-to-back. Interacts with the co-chaperonin GroES.

It is found in the cytoplasm. It carries out the reaction ATP + H2O + a folded polypeptide = ADP + phosphate + an unfolded polypeptide.. Functionally, together with its co-chaperonin GroES, plays an essential role in assisting protein folding. The GroEL-GroES system forms a nano-cage that allows encapsulation of the non-native substrate proteins and provides a physical environment optimized to promote and accelerate protein folding. This is Chaperonin GroEL from Orientia tsutsugamushi (strain Ikeda) (Rickettsia tsutsugamushi).